The primary structure comprises 322 residues: Glycerate dehydrogenase (322 aa).

NAD(+) is bound by residues 158 to 159 (SI), D178, 239 to 241 (TAR), and D265. R241 is a catalytic residue. The active site involves E270. H288 functions as the Proton donor in the catalytic mechanism. 288–291 (HIGS) contributes to the NAD(+) binding site.

This sequence belongs to the D-isomer specific 2-hydroxyacid dehydrogenase family. In terms of assembly, homodimer.

It catalyses the reaction (R)-glycerate + NAD(+) = 3-hydroxypyruvate + NADH + H(+). The protein operates within one-carbon metabolism; formaldehyde assimilation via serine pathway. In terms of biological role, active on hydroxypyruvate and glyoxylate. The sequence is that of Glycerate dehydrogenase from Hyphomicrobium methylovorum.